Reading from the N-terminus, the 204-residue chain is 3-isopropylmalate dehydratase small subunit (204 aa).

Belongs to the LeuD family. LeuD type 1 subfamily. Heterodimer of LeuC and LeuD.

It catalyses the reaction (2R,3S)-3-isopropylmalate = (2S)-2-isopropylmalate. The protein operates within amino-acid biosynthesis; L-leucine biosynthesis; L-leucine from 3-methyl-2-oxobutanoate: step 2/4. Catalyzes the isomerization between 2-isopropylmalate and 3-isopropylmalate, via the formation of 2-isopropylmaleate. This Ruthia magnifica subsp. Calyptogena magnifica protein is 3-isopropylmalate dehydratase small subunit.